A 135-amino-acid polypeptide reads, in one-letter code: ATP synthase epsilon chain (135 aa).

The protein belongs to the ATPase epsilon chain family. In terms of assembly, F-type ATPases have 2 components, CF(1) - the catalytic core - and CF(0) - the membrane proton channel. CF(1) has five subunits: alpha(3), beta(3), gamma(1), delta(1), epsilon(1). CF(0) has three main subunits: a, b and c.

The protein resides in the cell inner membrane. Produces ATP from ADP in the presence of a proton gradient across the membrane. The protein is ATP synthase epsilon chain of Rhodopseudomonas palustris (strain BisA53).